Consider the following 309-residue polypeptide: Tagatose-6-phosphate kinase (309 aa).

Belongs to the carbohydrate kinase PfkB family. LacC subfamily.

It catalyses the reaction D-tagatofuranose 6-phosphate + ATP = D-tagatofuranose 1,6-bisphosphate + ADP + H(+). Its pathway is carbohydrate metabolism; D-tagatose 6-phosphate degradation; D-glyceraldehyde 3-phosphate and glycerone phosphate from D-tagatose 6-phosphate: step 1/2. This chain is Tagatose-6-phosphate kinase, found in Streptococcus pneumoniae (strain P1031).